The sequence spans 382 residues: MEYQLLKTDGQARRGRLVFDRGVVETPAFMPVGTYGTVKGMTPEEVKETGAQILLGNTFHLWLRPGQAVMKLHGDLHDFMQWHGPILTDSGGFQVFSLGDIRKITEEGVYFRNPINGDTIFLSPEKSMEIQYDLGSDIVMIFDECTSYPSDWDYAKQSMEMSLRWAARSRQRFDELGNHNALFGIIQGSVYEDLRDVSVKRLVEIGFDGYAVGGLAVGEPKADMHRILAHLCPQIPADKPRYLMGVGKPEDLVEGVRRGIDMFDCVMPTRNARNGHLFVTDGVVKIRNARYKDDVAPLDAECDCYTCRNYSRAYLHHLDRCNEILGARLNTIHNLRYYQRLMAGLRQAIDEGKLEHFVGEFYRRTGKPAPPLVVELHNNEGI.

Catalysis depends on Asp89, which acts as the Proton acceptor. Substrate is bound by residues Asp89 to Phe93, Asp143, Gln187, and Gly214. An RNA binding region spans residues Gly245–Asp251. Asp264 acts as the Nucleophile in catalysis. The tract at residues Thr269–Arg273 is RNA binding; important for wobble base 34 recognition. Cys302, Cys304, Cys307, and His333 together coordinate Zn(2+).

It belongs to the queuine tRNA-ribosyltransferase family. As to quaternary structure, homodimer. Within each dimer, one monomer is responsible for RNA recognition and catalysis, while the other monomer binds to the replacement base PreQ1. Requires Zn(2+) as cofactor.

It catalyses the reaction 7-aminomethyl-7-carbaguanine + guanosine(34) in tRNA = 7-aminomethyl-7-carbaguanosine(34) in tRNA + guanine. It participates in tRNA modification; tRNA-queuosine biosynthesis. Catalyzes the base-exchange of a guanine (G) residue with the queuine precursor 7-aminomethyl-7-deazaguanine (PreQ1) at position 34 (anticodon wobble position) in tRNAs with GU(N) anticodons (tRNA-Asp, -Asn, -His and -Tyr). Catalysis occurs through a double-displacement mechanism. The nucleophile active site attacks the C1' of nucleotide 34 to detach the guanine base from the RNA, forming a covalent enzyme-RNA intermediate. The proton acceptor active site deprotonates the incoming PreQ1, allowing a nucleophilic attack on the C1' of the ribose to form the product. After dissociation, two additional enzymatic reactions on the tRNA convert PreQ1 to queuine (Q), resulting in the hypermodified nucleoside queuosine (7-(((4,5-cis-dihydroxy-2-cyclopenten-1-yl)amino)methyl)-7-deazaguanosine). This is Queuine tRNA-ribosyltransferase from Sodalis glossinidius (strain morsitans).